The chain runs to 429 residues: Forkhead box protein P3 (429 aa).

The segment at 1 to 67 (MPNPRPAKPM…SSLNPLPPSQ (67 aa)) is disordered. A Phosphoserine; by CDK2 modification is found at S19. At K31 the chain carries N6-acetyllysine. Over residues 56-67 (TSSSLNPLPPSQ) the composition is skewed to low complexity. Positions 67-75 (QLQLPTVPL) match the Nuclear export signal motif. The LXXLL motif motif lies at 91 to 95 (LQALL). The essential for transcriptional repressor activity and for interaction with KAT5 and HDAC7 stretch occupies residues 105–189 (LSTVDAHAQT…SNLLAAPQGS (85 aa)). The segment at 148-198 (LPPGINVASLEWVSREPALLCTFPRSGTPRKDSNLLAAPQGSYPLLANGVC) is interaction with IKZF4. T175 bears the Phosphothreonine; by CDK2 mark. Residues 196 to 221 (GVCKWPGCEKVFEEPEEFLKHCQADH) form a C2H2-type zinc finger. A Nuclear export signal motif is present at residues 238-247 (VQSLEQQLEL). The tract at residues 238–259 (VQSLEQQLELEKEKLGAMQAHL) is leucine-zipper. Residues K249 and K251 each participate in a glycyl lysine isopeptide (Lys-Gly) (interchain with G-Cter in ubiquitin) cross-link. N6-acetyllysine; alternate is present on residues K262 and K267. Residues K262 and K267 each participate in a glycyl lysine isopeptide (Lys-Gly) (interchain with G-Cter in ubiquitin); alternate cross-link. The tract at residues 277–336 (SSCCIVATSTQGSVLPAWSAPREAPDGGLFAVRRHLWGSHGNSSFPEFFHNMDYFKYHNM) is interaction with RUNX1. Positions 337 to 423 (RPPFTYATLI…RKKRSQRPNK (87 aa)) form a DNA-binding region, fork-head. Residue K393 forms a Glycyl lysine isopeptide (Lys-Gly) (interchain with G-Cter in ubiquitin) linkage. The Nuclear localization signal motif lies at 414–417 (RKKR). Position 418 is a phosphoserine (S418). Positions 418–429 (SQRPNKCSNPCP) are excised as a propeptide.

Homodimer. Dimerization is essential for its transcriptional regulator activity. Interacts with IKZF3. Interacts (via LXXLL motif) with isoform 4 of RORA (via AF-2 motif). Interacts with STUB1 and HSPA1A/B. Interacts with IKZF4, HDAC7 and KAT5. Interacts with RUNX1, RUNX2, RUNX3 and NFATC2. Interacts with RORC. Interacts with HDAC9 in the absence of T-cell stimulation. Interacts with RELA, PPP1CA, PPP1CB, PPP1CG, HSPA8 and USP7. In terms of processing, acetylation on lysine residues stabilizes FOXP3 and promotes differentiation of T-cells into induced regulatory T-cells (iTregs) associated with suppressive functions. Acetylation is mediated by a coordinated action of KAT5 and EP300/p300 acetyltransferases: EP300/p300 is required to enhance KAT5 autoacetylation, promoting acetylation of FOXP3 by KAT5. Deacetylated by SIRT1. Post-translationally, polyubiquitinated, leading to its proteasomal degradation in regulatory T-cells (Treg) which is mediated by STUB1 in a HSPA1A/B-dependent manner. Deubiquitinated by USP7 and USP44 leading to increase in protein stability. Phosphorylation at Ser-418 regulates its transcriptional repressor activity and consequently, regulatory T-cells (Treg) suppressive function. Phosphorylation by CDK2 negatively regulates its transcriptional activity and protein stability. In terms of processing, undergoes proteolytic cleavage in activated regulatory T-cells (Treg), and can be cleaved at either the N- or C-terminal site, or at both sites. Treg expressing the form cleaved at C-terminal site or both N- and C-terminal sites exhibit an increased induction of IL10 and an increased capacity to suppress proliferation of conventional T-cells in vitro. Treg expressing the form cleaved at only the C-terminal site are highly effective at preventing experimental colitis in an in vivo model of inflammatory bowel disease. High level of expression in thymus and spleen.

It localises to the nucleus. It is found in the cytoplasm. Transcriptional regulator which is crucial for the development and inhibitory function of regulatory T-cells (Treg). Plays an essential role in maintaining homeostasis of the immune system by allowing the acquisition of full suppressive function and stability of the Treg lineage, and by directly modulating the expansion and function of conventional T-cells. Can act either as a transcriptional repressor or a transcriptional activator depending on its interactions with other transcription factors, histone acetylases and deacetylases. The suppressive activity of Treg involves the coordinate activation of many genes, including CTLA4 and TNFRSF18 by FOXP3 along with repression of genes encoding cytokines such as interleukin-2 (IL2) and interferon-gamma (IFNG). Inhibits cytokine production and T-cell effector function by repressing the activity of two key transcription factors, RELA and NFATC2. Mediates transcriptional repression of IL2 via its association with histone acetylase KAT5 and histone deacetylase HDAC7. Can activate the expression of TNFRSF18, IL2RA and CTLA4 and repress the expression of IL2 and IFNG via its association with transcription factor RUNX1. Inhibits the differentiation of IL17 producing helper T-cells (Th17) by antagonizing RORC function, leading to down-regulation of IL17 expression, favoring Treg development. Inhibits the transcriptional activator activity of RORA. Can repress the expression of IL2 and IFNG via its association with transcription factor IKZF4. The protein is Forkhead box protein P3 (Foxp3) of Mus musculus (Mouse).